A 709-amino-acid chain; its full sequence is Putative extracellular sulfatase Sulf-1 homolog (709 aa).

A signal peptide spans 1 to 27 (MISNLRISNYFIIFYVLFLIIPIKVTS). Ca(2+) is bound by residues Asp43, Asp44, and Cys79. The active-site Nucleophile is the Cys79. Cys79 is modified (3-oxoalanine (Cys)). Asn103, Asn162, and Asn189 each carry an N-linked (GlcNAc...) asparagine glycan. Ca(2+) contacts are provided by Asp308 and His309. N-linked (GlcNAc...) asparagine glycosylation is found at Asn344, Asn468, Asn500, Asn540, Asn566, Asn610, and Asn620.

Belongs to the sulfatase family. Requires Ca(2+) as cofactor. Post-translationally, the conversion to 3-oxoalanine (also known as C-formylglycine, FGly), of a serine or cysteine residue in prokaryotes and of a cysteine residue in eukaryotes, is critical for catalytic activity.

The protein resides in the endoplasmic reticulum. It localises to the golgi apparatus. Its subcellular location is the golgi stack. It is found in the cell surface. The sequence is that of Putative extracellular sulfatase Sulf-1 homolog (sul-1) from Caenorhabditis elegans.